Reading from the N-terminus, the 422-residue chain is Metallocarboxypeptidase A (422 aa).

Positions 1–17 (MRSVLSFALLAANVVSA) are cleaved as a signal peptide. A propeptide spans 18–112 (AVLAPFDYSG…FEAYSAGYAP (95 aa)) (activation peptide). Positions 119–419 (SYHSYQDHLS…AGTVAMLKAV (301 aa)) constitute a Peptidase M14 domain. Zn(2+)-binding residues include H179 and E182. Residues 179 to 182 (HARE), R237, and 254 to 255 (NR) contribute to the substrate site. C248 and C271 are joined by a disulfide. H309 contributes to the Zn(2+) binding site. 310 to 311 (SY) contributes to the substrate binding site. The Proton donor/acceptor role is filled by E385.

This sequence belongs to the peptidase M14 family. The cofactor is Zn(2+).

It localises to the secreted. Functionally, extracellular metalloprotease that contributes to pathogenicity. This Arthroderma otae (strain ATCC MYA-4605 / CBS 113480) (Microsporum canis) protein is Metallocarboxypeptidase A (MCPA).